A 426-amino-acid polypeptide reads, in one-letter code: Enolase (426 aa).

Q163 provides a ligand contact to (2R)-2-phosphoglycerate. The active-site Proton donor is the E205. D242, E286, and D313 together coordinate Mg(2+). (2R)-2-phosphoglycerate contacts are provided by K338, R367, S368, and K389. The active-site Proton acceptor is K338.

It belongs to the enolase family. Mg(2+) serves as cofactor.

The protein resides in the cytoplasm. Its subcellular location is the secreted. The protein localises to the cell surface. It catalyses the reaction (2R)-2-phosphoglycerate = phosphoenolpyruvate + H2O. Its pathway is carbohydrate degradation; glycolysis; pyruvate from D-glyceraldehyde 3-phosphate: step 4/5. Functionally, catalyzes the reversible conversion of 2-phosphoglycerate (2-PG) into phosphoenolpyruvate (PEP). It is essential for the degradation of carbohydrates via glycolysis. The chain is Enolase from Helicobacter acinonychis (strain Sheeba).